The following is a 331-amino-acid chain: Tetraspanin-10 (331 aa).

Positions 1 to 34 (MKEEECSPLLSQDTAGREHPLTRNSPPTANIPCP) are disordered. The Cytoplasmic segment spans residues 1–76 (MKEEECSPLL…LSTGSNCVKY (76 aa)). The chain crosses the membrane as a helical span at residues 77–97 (LIFLSNFLFSLPSLLALAAGL). Topologically, residues 98–120 (WGLTVKRSQGIGWGGPVPTDPML) are extracellular. The helical transmembrane segment at 121–141 (MLVLGGLVVSVVSLSGCLGAF) threads the bilayer. At 142 to 152 (CENSCLLHWYC) the chain is on the cytoplasmic side. Residues 153–173 (GAVLFCLALEALAGVLMVTLW) traverse the membrane as a helical segment. The Extracellular segment spans residues 174–331 (KPLQDSLKYT…AAEDIEAGPL (158 aa)). 4 disulfides stabilise this stretch: Cys210–Cys277, Cys211–Cys241, Cys227–Cys235, and Cys242–Cys256. A glycan (N-linked (GlcNAc...) asparagine) is linked at Asn226.

This sequence belongs to the tetraspanin (TM4SF) family. In terms of assembly, interacts with ADAM10.

Its subcellular location is the cell membrane. Part of TspanC8 subgroup, composed of 6 members that interact with the transmembrane metalloprotease ADAM10. This interaction is required for ADAM10 exit from the endoplasmic reticulum and for enzymatic maturation and trafficking to the cell surface as well as substrate specificity. Different TspanC8/ADAM10 complexes have distinct substrates. This is Tetraspanin-10 (Tspan10) from Mus musculus (Mouse).